The sequence spans 142 residues: Large ribosomal subunit protein uL11 (142 aa).

Residues 86 to 105 form a disordered region; it reads LKSGSKEPGKQSAGQISRAK.

The protein belongs to the universal ribosomal protein uL11 family. Part of the ribosomal stalk of the 50S ribosomal subunit. Interacts with L10 and the large rRNA to form the base of the stalk. L10 forms an elongated spine to which L12 dimers bind in a sequential fashion forming a multimeric L10(L12)X complex. One or more lysine residues are methylated.

In terms of biological role, forms part of the ribosomal stalk which helps the ribosome interact with GTP-bound translation factors. This is Large ribosomal subunit protein uL11 from Chelativorans sp. (strain BNC1).